A 370-amino-acid polypeptide reads, in one-letter code: tRNA-specific 2-thiouridylase MnmA (370 aa).

Residues 12–19 (GMSGGVDS) and L38 contribute to the ATP site. C105 serves as the catalytic Nucleophile. An intrachain disulfide couples C105 to C204. Residue G129 participates in ATP binding. The interval 153-155 (KDQ) is interaction with tRNA. The active-site Cysteine persulfide intermediate is C204. The segment at 310–311 (RY) is interaction with tRNA.

It belongs to the MnmA/TRMU family.

The protein resides in the cytoplasm. The enzyme catalyses S-sulfanyl-L-cysteinyl-[protein] + uridine(34) in tRNA + AH2 + ATP = 2-thiouridine(34) in tRNA + L-cysteinyl-[protein] + A + AMP + diphosphate + H(+). Its function is as follows. Catalyzes the 2-thiolation of uridine at the wobble position (U34) of tRNA, leading to the formation of s(2)U34. This Desulfitobacterium hafniense (strain Y51) protein is tRNA-specific 2-thiouridylase MnmA.